A 334-amino-acid polypeptide reads, in one-letter code: GTPase Obg (334 aa).

One can recognise an Obg domain in the interval 1–159 (MRFVDEVVIK…KEVRLELNLL (159 aa)). An OBG-type G domain is found at 160 to 331 (ADVALLGLPN…LAKKLNEFLQ (172 aa)). Residues 166–173 (GLPNAGKS), 191–195 (FTTMY), 212–215 (DIPG), 282–285 (NKID), and 312–314 (SAA) each bind GTP. Mg(2+) contacts are provided by serine 173 and threonine 193.

This sequence belongs to the TRAFAC class OBG-HflX-like GTPase superfamily. OBG GTPase family. In terms of assembly, monomer. It depends on Mg(2+) as a cofactor.

It localises to the cytoplasm. In terms of biological role, an essential GTPase which binds GTP, GDP and possibly (p)ppGpp with moderate affinity, with high nucleotide exchange rates and a fairly low GTP hydrolysis rate. Plays a role in control of the cell cycle, stress response, ribosome biogenesis and in those bacteria that undergo differentiation, in morphogenesis control. The sequence is that of GTPase Obg from Francisella tularensis subsp. tularensis (strain WY96-3418).